The chain runs to 722 residues: Probable glycerol-3-phosphate dehydrogenase, mitochondrial (722 aa).

The N-terminal 43 residues, 1–43 (MSWVRFTKTGVAVVATSAAAVLALDMTNERRFQRQVKDHFRTV), are a transit peptide targeting the mitochondrion. 76 to 104 (DVLIIGGGATGAGVALDAQTRGLKTALVE) is a binding site for FAD. EF-hand domains lie at 624–659 (EEMQ…HNQK) and 660–695 (IDER…LKGG). Positions 673, 675, 677, 679, and 684 each coordinate Ca(2+).

Belongs to the FAD-dependent glycerol-3-phosphate dehydrogenase family. FAD is required as a cofactor.

The protein resides in the mitochondrion. It catalyses the reaction a quinone + sn-glycerol 3-phosphate = dihydroxyacetone phosphate + a quinol. It participates in polyol metabolism; glycerol degradation via glycerol kinase pathway; glycerone phosphate from sn-glycerol 3-phosphate (anaerobic route): step 1/1. Its activity is regulated as follows. Calcium-binding enhances the activity of the enzyme. This is Probable glycerol-3-phosphate dehydrogenase, mitochondrial from Caenorhabditis elegans.